The chain runs to 191 residues: Cell division protein SepF (191 aa).

The span at 153 to 178 shows a compositional bias: polar residues; it reads FPEEVSPSNISSKKTSPYSLETNTTP. The interval 153-191 is disordered; the sequence is FPEEVSPSNISSKKTSPYSLETNTTPEPAWGESKLSAFS.

Belongs to the SepF family. Homodimer. Interacts with FtsZ.

The protein resides in the cytoplasm. In terms of biological role, cell division protein that is part of the divisome complex and is recruited early to the Z-ring. Probably stimulates Z-ring formation, perhaps through the cross-linking of FtsZ protofilaments. Its function overlaps with FtsA. The chain is Cell division protein SepF from Prochlorococcus marinus (strain MIT 9515).